Consider the following 186-residue polypeptide: MSEGVDLKELKRRMDGAIAAFKHDIASLRTGRASANVLDPVTVEAYGSRMPLNQVANITVPESRMLSVSVWDKSMVGAVERAIRESNLGLNPIVDGQNLRIPLPELNEERRKSLVKVAHDYAEKSKVAVRHVRRDGMDDLKKAEKDGEIGQDESRAQSERVQKMTDDVISEIDRLLAEKEKEIMQV.

Positions 135–164 (DGMDDLKKAEKDGEIGQDESRAQSERVQKM) are disordered.

This sequence belongs to the RRF family.

It is found in the cytoplasm. In terms of biological role, responsible for the release of ribosomes from messenger RNA at the termination of protein biosynthesis. May increase the efficiency of translation by recycling ribosomes from one round of translation to another. This is Ribosome-recycling factor from Rhizobium meliloti (strain 1021) (Ensifer meliloti).